Consider the following 833-residue polypeptide: Leucine--tRNA ligase (833 aa).

Positions 41 to 52 match the 'HIGH' region motif; sequence PYPSGAGLHVGH. Positions 610 to 614 match the 'KMSKS' region motif; it reads KMSKS. Lys-613 contributes to the ATP binding site.

It belongs to the class-I aminoacyl-tRNA synthetase family.

The protein resides in the cytoplasm. It carries out the reaction tRNA(Leu) + L-leucine + ATP = L-leucyl-tRNA(Leu) + AMP + diphosphate. The sequence is that of Leucine--tRNA ligase from Streptococcus equi subsp. zooepidemicus (strain MGCS10565).